Here is a 260-residue protein sequence, read N- to C-terminus: Adenosylcobinamide-GDP ribazoletransferase (260 aa).

7 consecutive transmembrane segments (helical) span residues 42 to 62 (PLAG…ANAI), 64 to 84 (LPPL…TGAL), 117 to 137 (FAAL…MAII), 144 to 164 (YALL…LAFW), 192 to 212 (GLGL…VALI), 214 to 234 (ALVL…AKIG), and 240 to 260 (TLGA…VMAL).

The protein belongs to the CobS family. It depends on Mg(2+) as a cofactor.

It is found in the cell inner membrane. It carries out the reaction alpha-ribazole + adenosylcob(III)inamide-GDP = adenosylcob(III)alamin + GMP + H(+). The enzyme catalyses alpha-ribazole 5'-phosphate + adenosylcob(III)inamide-GDP = adenosylcob(III)alamin 5'-phosphate + GMP + H(+). Its pathway is cofactor biosynthesis; adenosylcobalamin biosynthesis; adenosylcobalamin from cob(II)yrinate a,c-diamide: step 7/7. Joins adenosylcobinamide-GDP and alpha-ribazole to generate adenosylcobalamin (Ado-cobalamin). Also synthesizes adenosylcobalamin 5'-phosphate from adenosylcobinamide-GDP and alpha-ribazole 5'-phosphate. The sequence is that of Adenosylcobinamide-GDP ribazoletransferase from Brucella melitensis biotype 1 (strain ATCC 23456 / CCUG 17765 / NCTC 10094 / 16M).